The chain runs to 347 residues: Probable tRNA N6-adenosine threonylcarbamoyltransferase (347 aa).

The a divalent metal cation site is built by His-109, His-113, and Tyr-130. Residues 130–134 (YVSGG), Asp-162, Gly-177, Glu-181, and Asn-277 each bind substrate. Asp-305 lines the a divalent metal cation pocket.

This sequence belongs to the KAE1 / TsaD family. Component of the EKC/KEOPS complex; the whole complex dimerizes. Requires a divalent metal cation as cofactor.

It localises to the cytoplasm. Its subcellular location is the nucleus. The catalysed reaction is L-threonylcarbamoyladenylate + adenosine(37) in tRNA = N(6)-L-threonylcarbamoyladenosine(37) in tRNA + AMP + H(+). Its function is as follows. Component of the EKC/KEOPS complex that is required for the formation of a threonylcarbamoyl group on adenosine at position 37 (t(6)A37) in tRNAs that read codons beginning with adenine. The complex is probably involved in the transfer of the threonylcarbamoyl moiety of threonylcarbamoyl-AMP (TC-AMP) to the N6 group of A37. Likely plays a direct catalytic role in this reaction, but requires other protein(s) of the complex to fulfill this activity. This is Probable tRNA N6-adenosine threonylcarbamoyltransferase from Drosophila melanogaster (Fruit fly).